The following is a 157-amino-acid chain: UPF0178 protein Nwi_2152 (157 aa).

This sequence belongs to the UPF0178 family.

This is UPF0178 protein Nwi_2152 from Nitrobacter winogradskyi (strain ATCC 25391 / DSM 10237 / CIP 104748 / NCIMB 11846 / Nb-255).